The chain runs to 794 residues: EVI5-like protein (794 aa).

Over residues 1 to 30 (MASPTLSPDSSSQEALSAPTCSPTSDSENL) the composition is skewed to polar residues. 2 disordered regions span residues 1–36 (MASP…DELE) and 49–75 (EADS…SSSA). Over residues 55–75 (MRSMNGSRRNSGSSLVSSSSA) the composition is skewed to low complexity. The Rab-GAP TBC domain occupies 115–300 (GIPHHFRAIV…RVFDIFMYEG (186 aa)). Coiled coils occupy residues 358–449 (KKMK…QQEN) and 569–709 (EAQA…LKGP). The residue at position 685 (serine 685) is a Phosphoserine. Positions 766–794 (LERPAKDSEGSSDSDADELAAPYSQGLDN) are disordered.

May interact with RAB10.

Functionally, functions as a GTPase-activating protein (GAP) with a broad specificity. The protein is EVI5-like protein (EVI5L) of Homo sapiens (Human).